Here is a 1309-residue protein sequence, read N- to C-terminus: Angiotensin-converting enzyme (1309 aa).

The signal sequence occupies residues 1–33; sequence MGAASGCRWPWPPLLPLLLMLLLPPPPLPVALA. The Extracellular portion of the chain corresponds to 34-1259; the sequence is LDSALQPGNF…GLNLEEQQAR (1226 aa). N-linked (GlcNAc...) asparagine glycans are attached at residues Asn42, Asn58, Asn78, Asn115, Asn135, Asn150, and Asn164. Peptidase M2 domains lie at 44–627 and 646–1225; these read TADE…LGWP and VSDE…LGWP. Cys161 and Cys169 form a disulfide bridge. Tyr235 serves as a coordination point for chloride. The N-linked (GlcNAc...) asparagine glycan is linked to Asn322. Residues Cys363 and Cys381 are joined by a disulfide bond. His394 contributes to the Zn(2+) binding site. Catalysis depends on Glu395, which acts as the Proton acceptor 1. Zn(2+) is bound by residues His398 and Glu422. A glycan (N-linked (GlcNAc...) asparagine) is linked at Asn512. The Proton donor 1 role is filled by His523. The N-linked (GlcNAc...) asparagine glycan is linked to Asn526. Chloride is bound at residue Arg532. Cys548 and Cys560 form a disulfide bridge. Asn680, Asn698, Asn717, and Asn763 each carry an N-linked (GlcNAc...) asparagine glycan. The cysteines at positions 760 and 766 are disulfide-linked. Chloride contacts are provided by Arg794 and Tyr832. Residue Asn945 is glycosylated (N-linked (GlcNAc...) asparagine). A disulfide bridge links Cys960 with Cys978. Zn(2+) is bound at residue His991. Glu992 functions as the Proton acceptor 2 in the catalytic mechanism. 2 residues coordinate Zn(2+): His995 and Glu1019. 2 residues coordinate chloride: Trp1093 and Arg1097. Residue His1121 is the Proton donor 2 of the active site. Arg1130 is a chloride binding site. An intrachain disulfide couples Cys1146 to Cys1158. N-linked (GlcNAc...) asparagine glycans are attached at residues Asn1194 and Asn1228. A juxtamembrane stalk region spans residues 1218–1259; that stretch reads HGEKLGWPQYNWTPNSARLEGSFAGTGRVNFLGLNLEEQQAR. A helical transmembrane segment spans residues 1260–1280; it reads VGQWVLLFLGVTLLVATMGLT. Residues 1281 to 1309 lie on the Cytoplasmic side of the membrane; the sequence is QRLFSIRHQILRRTHRGPQFGSEVELRHS. Ser1302 is modified (phosphoserine).

The protein belongs to the peptidase M2 family. Monomer and homodimer; homodimerizes following binding to an inhibitor. Interacts with calmodulin (CALM1, CALM2 or CALM3); interaction takes place in the cytoplasmic region and regulates phosphorylation and proteolytic cleavage. Zn(2+) serves as cofactor. Requires chloride as cofactor. Post-translationally, produced following proteolytic cleavage by secretase enzymes that cleave the transmembrane form in the juxtamembrane stalk region upstream of the transmembrane region. Cleavage can take place at different sites of the juxtamembrane stalk region. In terms of processing, phosphorylated by CK2 on Ser-1302; which allows membrane retention. Phosphorylated on tyrosine residues on its extracellular part, promoting cleavage by secretase enzymes and formation of the soluble form (Angiotensin-converting enzyme, soluble form).

It is found in the cell membrane. Its subcellular location is the cytoplasm. The protein localises to the secreted. It carries out the reaction Release of a C-terminal dipeptide, oligopeptide-|-Xaa-Yaa, when Xaa is not Pro, and Yaa is neither Asp nor Glu. Thus, conversion of angiotensin I to angiotensin II, with increase in vasoconstrictor activity, but no action on angiotensin II.. It catalyses the reaction angiotensin I + H2O = L-histidyl-L-leucine + angiotensin II. The enzyme catalyses bradykinin + H2O = L-Phe-L-Arg + bradykinin(1-7). The catalysed reaction is substance P + H2O = substance P(1-9) + L-Leu-L-Met-NH2. It carries out the reaction substance P + H2O = substance P(1-8) + Gly-L-Leu-L-Met-NH2. It catalyses the reaction substance P + H2O = L-Phe-L-Phe-Gly-L-Leu-L-Met-NH2 + substance P(1-6). The enzyme catalyses neurotensin + H2O = neurotensin(1-11) + L-isoleucyl-L-leucine. The catalysed reaction is goralatide + H2O = N-acetyl-L-seryl-L-aspartate + L-lysyl-L-proline. It carries out the reaction Met-enkephalin + H2O = L-phenylalanyl-L-methionine + L-tyrosylglycylglycine. It catalyses the reaction Leu-enkephalin + H2O = L-tyrosylglycylglycine + L-phenylalanyl-L-leucine. The enzyme catalyses Met-enkephalin-Arg-Phe + H2O = L-arginyl-L-phenylalanine + Met-enkephalin. Its activity is regulated as follows. The dipeptidyl carboxypeptidase activity is strongly activated by chloride. The dipeptidyl carboxypeptidase activity is specifically inhibited by lisinopril, captopril and enalaprilat. In terms of biological role, dipeptidyl carboxypeptidase that removes dipeptides from the C-terminus of a variety of circulating hormones, such as angiotensin I, bradykinin or enkephalins, thereby playing a key role in the regulation of blood pressure, electrolyte homeostasis or synaptic plasticity. Composed of two similar catalytic domains, each possessing a functional active site, with different selectivity for substrates. Plays a major role in the angiotensin-renin system that regulates blood pressure and sodium retention by the kidney by converting angiotensin I to angiotensin II, resulting in an increase of the vasoconstrictor activity of angiotensin. Also able to inactivate bradykinin, a potent vasodilator, and therefore enhance the blood pressure response. Acts as a regulator of synaptic transmission by mediating cleavage of neuropeptide hormones, such as substance P, neurotensin or enkephalins. Catalyzes degradation of different enkephalin neuropeptides (Met-enkephalin, Leu-enkephalin, Met-enkephalin-Arg-Phe and possibly Met-enkephalin-Arg-Gly-Leu). Acts as a regulator of synaptic plasticity in the nucleus accumbens of the brain by mediating cleavage of Met-enkephalin-Arg-Phe, a strong ligand of Mu-type opioid receptor OPRM1, into Met-enkephalin. Met-enkephalin-Arg-Phe cleavage by ACE decreases activation of OPRM1, leading to long-term synaptic potentiation of glutamate release. Also acts as a regulator of hematopoietic stem cell differentiation by mediating degradation of hemoregulatory peptide N-acetyl-SDKP (AcSDKP). Acts as a regulator of cannabinoid signaling pathway by mediating degradation of hemopressin, an antagonist peptide of the cannabinoid receptor CNR1. Involved in amyloid-beta metabolism by catalyzing degradation of Amyloid-beta protein 40 and Amyloid-beta protein 42 peptides, thereby preventing plaque formation. Catalyzes cleavage of cholecystokinin (maturation of Cholecystokinin-8 and Cholecystokinin-5) and Gonadoliberin-1 (both maturation and degradation) hormones. Degradation of hemoregulatory peptide N-acetyl-SDKP (AcSDKP) and amyloid-beta proteins is mediated by the N-terminal catalytic domain, while angiotensin I and cholecystokinin cleavage is mediated by the C-terminal catalytic region. Soluble form that is released in blood plasma and other body fluids following proteolytic cleavage in the juxtamembrane stalk region. In Sus scrofa (Pig), this protein is Angiotensin-converting enzyme.